Consider the following 735-residue polypeptide: ATP-dependent DNA helicase Hel308 (735 aa).

ATP-binding positions include Q32 and 50–57; that span reads APTGSGKT. In terms of domain architecture, Helicase ATP-binding spans 37–201; it reads QAGVEKGENL…WIGGKIVESS (165 aa). The DEAH box signature appears at 146-149; sequence DEIH. The 197-residue stretch at 235–431 folds into the Helicase C-terminal domain; the sequence is DLDLAAEAIE…GLRGLRHFIL (197 aa).

This sequence belongs to the helicase family. Hel308 subfamily. In terms of assembly, monomer.

It carries out the reaction Couples ATP hydrolysis with the unwinding of duplex DNA by translocating in the 3'-5' direction.. The catalysed reaction is ATP + H2O = ADP + phosphate + H(+). Functionally, DNA-dependent ATPase and 3'-5' DNA helicase that may be involved in repair of stalled replication forks. This Aeropyrum pernix (strain ATCC 700893 / DSM 11879 / JCM 9820 / NBRC 100138 / K1) protein is ATP-dependent DNA helicase Hel308.